A 446-amino-acid polypeptide reads, in one-letter code: tRNA-2-methylthio-N(6)-dimethylallyladenosine synthase (446 aa).

Residues 3-119 (KKIFIKTFGC…INEAILNHLK (117 aa)) enclose the MTTase N-terminal domain. Residues cysteine 12, cysteine 48, cysteine 82, cysteine 158, cysteine 162, and cysteine 165 each coordinate [4Fe-4S] cluster. Residues 144–374 (KDSKVSSFLT…QEKLFNNQIK (231 aa)) enclose the Radical SAM core domain. Residues 377 to 439 (KSLENKILNV…QNSLFGKLTE (63 aa)) form the TRAM domain.

The protein belongs to the methylthiotransferase family. MiaB subfamily. As to quaternary structure, monomer. The cofactor is [4Fe-4S] cluster.

It is found in the cytoplasm. The catalysed reaction is N(6)-dimethylallyladenosine(37) in tRNA + (sulfur carrier)-SH + AH2 + 2 S-adenosyl-L-methionine = 2-methylsulfanyl-N(6)-dimethylallyladenosine(37) in tRNA + (sulfur carrier)-H + 5'-deoxyadenosine + L-methionine + A + S-adenosyl-L-homocysteine + 2 H(+). In terms of biological role, catalyzes the methylthiolation of N6-(dimethylallyl)adenosine (i(6)A), leading to the formation of 2-methylthio-N6-(dimethylallyl)adenosine (ms(2)i(6)A) at position 37 in tRNAs that read codons beginning with uridine. The protein is tRNA-2-methylthio-N(6)-dimethylallyladenosine synthase of Pelagibacter ubique (strain HTCC1062).